The chain runs to 494 residues: Cytochrome P450 2A11 (494 aa).

Lysine 379 bears the N6-acetyllysine mark. Position 439 (cysteine 439) interacts with heme.

The protein belongs to the cytochrome P450 family. The cofactor is heme. As to expression, expressed in liver and lung as well as in nasal tissues.

It is found in the endoplasmic reticulum membrane. Its subcellular location is the microsome membrane. It carries out the reaction an organic molecule + reduced [NADPH--hemoprotein reductase] + O2 = an alcohol + oxidized [NADPH--hemoprotein reductase] + H2O + H(+). Its function is as follows. Catalyzes the oxygenation of a variety of substrates, including ethanol and procarcinogens such as N-nitrosodiethylamine and phenacetin. Has no or little activity as a coumarin 7-hydroxylase and in the formation of androstenedione from testosterone. The polypeptide is Cytochrome P450 2A11 (CYP2A11) (Oryctolagus cuniculus (Rabbit)).